The chain runs to 339 residues: Methylthioribose-1-phosphate isomerase (339 aa).

Residues 49–51 (RGA), Arg86, and Gln187 contribute to the substrate site. Asp228 serves as the catalytic Proton donor. Residue 238–239 (NK) participates in substrate binding.

It belongs to the eIF-2B alpha/beta/delta subunits family. MtnA subfamily.

It catalyses the reaction 5-(methylsulfanyl)-alpha-D-ribose 1-phosphate = 5-(methylsulfanyl)-D-ribulose 1-phosphate. The protein operates within amino-acid biosynthesis; L-methionine biosynthesis via salvage pathway; L-methionine from S-methyl-5-thio-alpha-D-ribose 1-phosphate: step 1/6. In terms of biological role, catalyzes the interconversion of methylthioribose-1-phosphate (MTR-1-P) into methylthioribulose-1-phosphate (MTRu-1-P). The sequence is that of Methylthioribose-1-phosphate isomerase from Cronobacter sakazakii (strain ATCC BAA-894) (Enterobacter sakazakii).